A 121-amino-acid polypeptide reads, in one-letter code: Large ribosomal subunit protein uL18 (121 aa).

The protein belongs to the universal ribosomal protein uL18 family. As to quaternary structure, part of the 50S ribosomal subunit; part of the 5S rRNA/L5/L18/L25 subcomplex. Contacts the 5S and 23S rRNAs.

Its function is as follows. This is one of the proteins that bind and probably mediate the attachment of the 5S RNA into the large ribosomal subunit, where it forms part of the central protuberance. This is Large ribosomal subunit protein uL18 from Streptococcus equi subsp. zooepidemicus (strain MGCS10565).